The sequence spans 952 residues: Respiratory burst oxidase homolog protein E (952 aa).

The Cytoplasmic portion of the chain corresponds to 1-392 (MKLSPLSFST…QCLILDNWQR (392 aa)). 2 EF-hand-like regions span residues 211 to 219 (SKNGLLARD) and 245 to 256 (RRQKLEKITKDE). EF-hand domains follow at residues 268 to 303 (SFDA…SASA) and 312 to 347 (QAEE…RDAY). 5 residues coordinate Ca(2+): aspartate 281, asparagine 283, aspartate 285, lysine 287, and glutamate 292. A helical membrane pass occupies residues 393–413 (SWVLLVWVMLMAILFVWKFLE). Topologically, residues 414–475 (YREKAAFKVM…PFDDNINFHK (62 aa)) are extracellular. Residues 431-587 (KGAAETLKLN…LLVVVYIMLI (157 aa)) enclose the Ferric oxidoreductase domain. Residues 476–496 (IIACAIAIGILVHAGTHLACD) traverse the membrane as a helical segment. At 497-531 (FPRIINSSPEQFVLIASAFNGTKPTFKDLMTGAEG) the chain is on the cytoplasmic side. A helical membrane pass occupies residues 532-552 (ITGISMVILTTIAFTLASTHF). At 553-574 (RRNRVRLPAPLDRLTGFNAFWY) the chain is on the extracellular side. The chain crosses the membrane as a helical span at residues 575–595 (THHLLVVVYIMLIVHGTFLFF). Residues 596–603 (ADKWYQKT) lie on the Cytoplasmic side of the membrane. The helical transmembrane segment at 604–621 (TWMYISVPLVLYVAERSL) threads the bilayer. Residues 622-750 (RACRSKHYSV…PYGAPAQDYR (129 aa)) lie on the Extracellular side of the membrane. Residues 626–748 (SKHYSVKILK…DGPYGAPAQD (123 aa)) enclose the FAD-binding FR-type domain. The chain crosses the membrane as a helical span at residues 751 to 771 (SYDVLLLIGLGIGATPFISIL). Residues 772 to 952 (KDLLNNSRDE…TRFEFHKEHF (181 aa)) are Cytoplasmic-facing.

Belongs to the RBOH (TC 5.B.1.3) family. Monomer and homodimer. Expressed in roots, inflorescences, leaves and stems.

It is found in the membrane. Calcium-dependent NADPH oxidase that generates superoxide. The chain is Respiratory burst oxidase homolog protein E (RBOHE) from Arabidopsis thaliana (Mouse-ear cress).